The chain runs to 398 residues: Mitogen-activated protein kinase 1 (398 aa).

The tract at residues methionine 1–alanine 26 is disordered. One can recognise a Protein kinase domain in the interval lysine 67–leucine 352. ATP-binding positions include isoleucine 73–valine 81 and lysine 96. Residue aspartate 193 is the Proton acceptor of the active site. Threonine 225 bears the Phosphothreonine mark. Positions threonine 225–tyrosine 227 match the TXY motif. Phosphotyrosine is present on tyrosine 227.

This sequence belongs to the protein kinase superfamily. CMGC Ser/Thr protein kinase family. MAP kinase subfamily. In terms of assembly, may interact with RAC1. Post-translationally, dually phosphorylated on Thr-225 and Tyr-227, which activates the enzyme.

The enzyme catalyses L-seryl-[protein] + ATP = O-phospho-L-seryl-[protein] + ADP + H(+). It carries out the reaction L-threonyl-[protein] + ATP = O-phospho-L-threonyl-[protein] + ADP + H(+). Its activity is regulated as follows. Activated by threonine and tyrosine phosphorylation. Activated in response to sphingolipid elicitor (SE). Functionally, involved in sphingolipid elicitor (SE)-dependent defense signaling pathway. Acts downstream of heterotrimeric G protein alpha subunit and small GTPase RAC1. May regulate the expression of various genes involved in biotic and abiotic stress response. Involved in an abscisic acid signaling pathway that regulates the activities of antioxidant enzymes and the production of hydrogen peroxide. Acts downstream of CCAMK. The polypeptide is Mitogen-activated protein kinase 1 (MPK1) (Oryza sativa subsp. japonica (Rice)).